The chain runs to 320 residues: Annexin A5 (320 aa).

A2 is subject to N-acetylalanine. Annexin repeat units lie at residues 15-86 (FDER…ALMK), 87-158 (PSRL…VLLQ), 170-242 (AQVE…AVVK), and 246-317 (SIPA…LLCG). K29 participates in a covalent cross-link: Glycyl lysine isopeptide (Lys-Gly) (interchain with G-Cter in SUMO1); alternate. A Glycyl lysine isopeptide (Lys-Gly) (interchain with G-Cter in SUMO2); alternate cross-link involves residue K29. S37 is subject to Phosphoserine. N6-acetyllysine occurs at positions 70, 76, 79, 97, and 101. K290 carries the post-translational modification N6-succinyllysine. The short motif at 314-320 (LLCGGED) is the [IL]-x-C-x-x-[DE] motif element.

The protein belongs to the annexin family. In terms of assembly, monomer. Binds ATRX and EIF5B. In terms of processing, S-nitrosylation is induced by interferon-gamma and oxidatively-modified low-densitity lipoprotein (LDL(ox)) possibly implicating the iNOS-S100A8/9 transnitrosylase complex.

Its function is as follows. This protein is an anticoagulant protein that acts as an indirect inhibitor of the thromboplastin-specific complex, which is involved in the blood coagulation cascade. The chain is Annexin A5 (ANXA5) from Macaca fascicularis (Crab-eating macaque).